Here is an 873-residue protein sequence, read N- to C-terminus: Tetratricopeptide repeat protein 16 (873 aa).

The tract at residues 1–20 is disordered; sequence MTDSDEDALKVDQGPSRDIP. 8 TPR repeats span residues 61 to 94, 96 to 128, 136 to 169, 251 to 284, 285 to 318, 331 to 364, 365 to 398, and 406 to 439; these read VREYYSRGQQCLEQADWETAVLLFSRALHLDPQL, DFYALRAEAYLQLCDFSSAAQNLRRAYSLQQDN, TFVLYLQGQCLFEQCAFLDALNVFSHAAELQPEK, AQQARQDAGILAVQGKLQHALQRINRAIENNPLD, PSLFLFRGTMYRRLQEFDGAVEDFLKVLDMVTED, LLTYNDFAVHCYRQGAYQEGVLLLNKALRDEQQE, KGLYINRGDCFFQLGNLAFAEADYQQALALSPQD, and GLLQEKMGFCEQRRKQFQKAENHFSTAIRHNPQK. 2 disordered regions span residues 553 to 626 and 639 to 873; these read EELK…TSET and SATA…YEAV. Over residues 571–582 the composition is skewed to acidic residues; that stretch reads GEAEAPEEEEEK. Positions 583 to 593 are enriched in basic and acidic residues; it reads EKEKKEEKKSE. Composition is skewed to polar residues over residues 600–626, 639–663, and 675–693; these read ASLSDSYLDQTSSASSMSFRTTGTSET, SATAVTFSDSSLLKTQSSDSGNNRE, and TQGQRQSLSKTEPTQSQRR. Residues 694-708 show a composition bias toward basic residues; the sequence is NSSKTKATIHKRNSS. Residues 709 to 750 are compositionally biased toward polar residues; sequence KTKATQSQRRNSSKTRATQGQGQSSSKTEATQGQRQSSSEIE. A compositionally biased stretch (basic residues) spans 763–784; sequence KTTRSPRQRPRKVKAARGRSWR. Polar residues-rich tracts occupy residues 800-828 and 836-860; these read RSSTKTEAFYDSNWSLSKTEYAQGQGQRS and GKSQGMSSTSSKAESTWGPSPSLSK.

The chain is Tetratricopeptide repeat protein 16 (TTC16) from Homo sapiens (Human).